A 963-amino-acid polypeptide reads, in one-letter code: MGKPTLLEPGHLYNVPAEHKNDIPIHYIITWIKQRLPEFGGSIPTSLADRVLIIKSRTGSGKSTALPVHVFRILRNENTHSFQKYLGRSVICTQPRVLTAVTLAKDIGASTHYPDMILGQTVGYQTKPLTEKPNRGLIYATAGVLLAQLHTMTDDEIASRYAFMIIDEAHERALGIDLMLMYIKSMLERMLQRGSIGALRIPFVILTSATIDTYKYSTYFGIGKENIILVEGRQFGVETHWPLYNTNNYIKTACETALTIHKENIHDRPTEADILIFMPGMGEIRFLSMLLSHANMDLAKEKLPLMLILPIDSEAIAQENEAYLGLKAEIKDLWVKNPLTAKVEKPLRRVIVSTVVAETGLTIETLKYVIDPGWNRSVETYYPEWAGGLITRPAAQSRIEQRKGRVGRVFPGHFYPLYTKHVFEQIPAQQYPEIITEGPGAIFLNIVVETIKKNKEGVFKVQEIDMLDPPPTDALASALERAIVGGLLTRGEKGLQLTQLGDIASRFSFLSIEEARMCFSGYFWQAAISDIATILAVVSVVDKKLTNLLDSKQRNGAMLAEAVLAGIPPFLQNMDNAYSNIHLLLADDLLEGLFIFEGFQHAIIYFINNKVNNLAKHLREWCEKKMLKYSAMVQILARREDILNELAVVGLNPFHQWQNRLASANAETFLKRVCTLKQCFYEAYRLNCFCYDEQRLLYTGRNGIHFSYQDTVIKNPSCIVTPKMMLSPVSKQYMEWRLEPSFVSVLDGFVNVDINFLLPRQEIPNILGGGVEDEEEEPPLPIQAFLHKYVKTNFHFSGKSFKELKMKPHQTIKFPETTLINIIPDIPKNVVQTYLEISVCHQYSFKRLIYCETFYTDMDDVQQENSVELIGLPMAAHHLTMHDFNKLYQLLKPDGFLIVYDFHKSQEAFWLHSLQDALGHHTIRRDMDFHTISEWETIFKECGFTPMFNKQPSEHELFIVFKK.

The Helicase ATP-binding domain maps to 43-229 (IPTSLADRVL…FGIGKENIIL (187 aa)). Residue 56 to 63 (SRTGSGKS) coordinates ATP. Positions 167-170 (DEAH) match the DEAH box motif. Positions 253–459 (ACETALTIHK…TIKKNKEGVF (207 aa)) constitute a Helicase C-terminal domain. Residues 521 to 541 (GYFWQAAISDIATILAVVSVV) form a helical membrane-spanning segment.

The protein belongs to the DEAD box helicase family. DEAH subfamily.

The protein resides in the host membrane. It localises to the virion. It catalyses the reaction ATP + H2O = ADP + phosphate + H(+). The chain is Putative RNA Helicase B962L from Ornithodoros (relapsing fever ticks).